We begin with the raw amino-acid sequence, 73 residues long: RNA-binding protein Hfq (73 aa).

In terms of domain architecture, Sm spans 8 to 68 (DQFLNQIRKE…ISTFAPQKNV (61 aa)).

It belongs to the Hfq family. In terms of assembly, homohexamer.

Functionally, RNA chaperone that binds small regulatory RNA (sRNAs) and mRNAs to facilitate mRNA translational regulation in response to envelope stress, environmental stress and changes in metabolite concentrations. Also binds with high specificity to tRNAs. This is RNA-binding protein Hfq from Bacillus subtilis (strain 168).